The chain runs to 225 residues: MOB-like protein phocein (225 aa).

Zn(2+) contacts are provided by cysteine 92, cysteine 97, cysteine 110, histidine 113, cysteine 119, histidine 127, histidine 169, and histidine 174.

The protein belongs to the MOB1/phocein family. Binds STRN4. Interacts with DNM1 and EPS15. Interacts with nucleoside diphosphate kinase. Interacts with CTTNBP2. Interacts with CTTNBP2NL. Part of the core of STRIPAK complexes composed of PP2A catalytic and scaffolding subunits, the striatins (PP2A regulatory subunits), the striatin-associated proteins MOB4, STRIP1 and STRIP2, PDCD10 and members of the STE20 kinases, such as STK24 and STK26. Post-translationally, phosphorylated on serine residues. Highly expressed in adrenal gland, spinal cord, brain and cerebellum. Detected at lower levels in heart and skeletal muscle, and at very low levels in spleen, liver and intestine.

The protein localises to the cytoplasm. It localises to the membrane. The protein resides in the golgi apparatus. It is found in the golgi stack membrane. Part of the striatin-interacting phosphatase and kinase (STRIPAK) complexes. STRIPAK complexes have critical roles in protein (de)phosphorylation and are regulators of multiple signaling pathways including Hippo, MAPK, nuclear receptor and cytoskeleton remodeling. Different types of STRIPAK complexes are involved in a variety of biological processes such as cell growth, differentiation, apoptosis, metabolism and immune regulation. This Rattus norvegicus (Rat) protein is MOB-like protein phocein (Mob4).